The chain runs to 871 residues: Protein translocase subunit SecA (871 aa).

ATP contacts are provided by residues Gln-80, 98–102, and Asp-537; that span reads GEGKT.

Belongs to the SecA family. As to quaternary structure, monomer and homodimer. Part of the essential Sec protein translocation apparatus which comprises SecA, SecYEG and auxiliary proteins SecDF. Other proteins may also be involved.

The protein localises to the cell inner membrane. The protein resides in the cytoplasm. It catalyses the reaction ATP + H2O + cellular proteinSide 1 = ADP + phosphate + cellular proteinSide 2.. Functionally, part of the Sec protein translocase complex. Interacts with the SecYEG preprotein conducting channel. Has a central role in coupling the hydrolysis of ATP to the transfer of proteins into and across the cell membrane, serving as an ATP-driven molecular motor driving the stepwise translocation of polypeptide chains across the membrane. This is Protein translocase subunit SecA from Thermotoga sp. (strain RQ2).